Here is a 1009-residue protein sequence, read N- to C-terminus: Epididymis-specific alpha-mannosidase (1009 aa).

The signal sequence occupies residues 1–23 (MGQLCWLPLLAPLLLLRPPGVQS). Zn(2+) contacts are provided by His36, Asp38, and Asp151. The active-site Nucleophile is the Asp151. N-linked (GlcNAc...) asparagine glycans are attached at residues Asn226, Asn249, Asn294, and Asn336. A Zn(2+)-binding site is contributed by His420. Residues Asn516, Asn608, Asn670, Asn675, Asn748, Asn808, Asn812, and Asn890 are each glycosylated (N-linked (GlcNAc...) asparagine). Residues 972 to 991 (GPGRHRGDTTSPSRPPGGPI) are disordered.

Belongs to the glycosyl hydrolase 38 family. Zn(2+) serves as cofactor.

The protein resides in the secreted. The enzyme catalyses Hydrolysis of terminal, non-reducing alpha-D-mannose residues in alpha-D-mannosides.. This is Epididymis-specific alpha-mannosidase (MAN2B2) from Homo sapiens (Human).